Here is a 92-residue protein sequence, read N- to C-terminus: Putative pterin-4-alpha-carbinolamine dehydratase (92 aa).

It belongs to the pterin-4-alpha-carbinolamine dehydratase family.

The enzyme catalyses (4aS,6R)-4a-hydroxy-L-erythro-5,6,7,8-tetrahydrobiopterin = (6R)-L-erythro-6,7-dihydrobiopterin + H2O. The chain is Putative pterin-4-alpha-carbinolamine dehydratase from Haloarcula marismortui (strain ATCC 43049 / DSM 3752 / JCM 8966 / VKM B-1809) (Halobacterium marismortui).